A 222-amino-acid polypeptide reads, in one-letter code: C-reactive protein (222 aa).

A signal peptide spans 1–19 (MEKLSLCLLVIISLSNAFA). Q20 carries the pyrrolidone carboxylic acid modification. The 199-residue stretch at 24 to 222 (IGKAFVFPKE…EVYVKPQLWP (199 aa)) folds into the Pentraxin (PTX) domain. A disulfide bridge connects residues C55 and C113. Residues N78, E154, Q155, D156, and Q166 each coordinate Ca(2+).

It belongs to the pentraxin family. As to quaternary structure, homopentamer. Pentraxin (or pentaxin) have a discoid arrangement of 5 non-covalently bound subunits. Interacts with FCN1; may regulate monocyte activation by FCN1. Ca(2+) is required as a cofactor. As to expression, found in plasma.

It is found in the secreted. Functionally, displays several functions associated with host defense: it promotes agglutination, bacterial capsular swelling, phagocytosis and complement fixation through its calcium-dependent binding to phosphorylcholine. Can interact with DNA and histones and may scavenge nuclear material released from damaged circulating cells. This is C-reactive protein (CRP) from Sus scrofa (Pig).